The sequence spans 435 residues: Serine/threonine-protein kinase 40 (435 aa).

A compositionally biased stretch (basic and acidic residues) spans 1-10 (MKRRASDRGA). The interval 1–25 (MKRRASDRGAGETSARAKALGSGIS) is disordered. The Protein kinase domain occupies 35–331 (FILGPRLGNS…ADVLEALSAI (297 aa)). Residues 41–49 (LGNSPVPSI) and Lys66 each bind ATP. Catalysis depends on Arg196, which acts as the Proton acceptor.

Belongs to the protein kinase superfamily. CAMK Ser/Thr protein kinase family. Strongly expressed in heart, brain, placenta, lung, skeletal muscle, kidney, spleen, thymus, prostate, liver, pancreas, testis, ovary, small intestine, colon and peripheral blood leukocytes.

Its subcellular location is the nucleus. It is found in the cytoplasm. It carries out the reaction L-seryl-[protein] + ATP = O-phospho-L-seryl-[protein] + ADP + H(+). The catalysed reaction is L-threonyl-[protein] + ATP = O-phospho-L-threonyl-[protein] + ADP + H(+). May be a negative regulator of NF-kappa-B and p53-mediated gene transcription. The protein is Serine/threonine-protein kinase 40 (STK40) of Homo sapiens (Human).